The primary structure comprises 825 residues: MDVSLCPAKCSFWRIFLLGSVWLDYVGSVLACPANCVCSKTEINCRRPDDGNLFPLLEGQDSGNSNGNASINITDISRNITSIHIENWRSLHTLNAVDMELYTGLQKLTIRNSGLRSIQPRAFAKNPHLRYINLSSNRLTTLSWQLFQTLSLRELQLEQNFFNCSCDIRWMQLWQEQGEAKLNNQNLYCINADGSQLPLFRMNISQCDLPEISVSHVNLTVREGDNAVITCNGSGSPLPDVDWIVTGLQSINTHQTNLNWTNVHAINLTLVNVTSEDNGFTLTCIAENVVGMSNASVALTVYYPPRVVSLEEPELRLEHCIEFVVRGNPPPTLHWLHNGQPLRESKIIHVEYYQEGEISEGCLLFNKPTHYNNGNYTLIAKNPLGTANQTINGHFLKEPFPESTDNFILFDEVSPTPPITVTHKPEEDTFGVSIAVGLAAFACVLLVVLFIMINKYGRRSKFGMKGPVAVISGEEDSASPLHHINHGITTPSSLDAGPDTVVIGMTRIPVIENPQYFRQGHNCHKPDTYVQHIKRRDIVLKRELGEGAFGKVFLAECYNLSPTKDKMLVAVKALKDPTLAARKDFQREAELLTNLQHEHIVKFYGVCGDGDPLIMVFEYMKHGDLNKFLRAHGPDAMILVDGQPRQAKGELGLSQMLHIASQIASGMVYLASQHFVHRDLATRNCLVGANLLVKIGDFGMSRDVYSTDYYRVGGHTMLPIRWMPPESIMYRKFTTESDVWSFGVILWEIFTYGKQPWFQLSNTEVIECITQGRVLERPRVCPKEVYDVMLGCWQREPQQRLNIKEIYKILHALGKATPIYLDILG.

An N-terminal signal peptide occupies residues 1–31 (MDVSLCPAKCSFWRIFLLGSVWLDYVGSVLA). Intrachain disulfides connect Cys32/Cys38 and Cys36/Cys45. Residues 32–429 (CPANCVCSKT…TVTHKPEEDT (398 aa)) lie on the Extracellular side of the membrane. Residues Asn68, Asn72, and Asn79 are each glycosylated (N-linked (GlcNAc...) asparagine). LRR repeat units lie at residues 104-125 (GLQK…AFAK) and 128-149 (HLRY…LFQT). N-linked (GlcNAc...) asparagine glycans are attached at residues Asn133 and Asn163. Positions 160-209 (NFFNCSCDIRWMQLWQEQGEAKLNNQNLYCINADGSQLPLFRMNISQCDL) constitute an LRRCT domain. 2 disulfides stabilise this stretch: Cys164–Cys189 and Cys166–Cys207. N-linked (GlcNAc...) asparagine glycosylation is found at Asn203, Asn218, Asn232, Asn259, Asn267, Asn272, and Asn294. Ig-like C2-type domains lie at 210 to 300 (PEIS…VALT) and 309 to 382 (SLEE…IAKN). A disulfide bridge connects residues Cys231 and Cys284. Residues Cys320 and Cys362 are joined by a disulfide bond. N-linked (GlcNAc...) asparagine glycosylation is found at Asn375 and Asn388. Residues 430–453 (FGVSIAVGLAAFACVLLVVLFIMI) form a helical membrane-spanning segment. Residues 454–825 (NKYGRRSKFG…ATPIYLDILG (372 aa)) are Cytoplasmic-facing. Residue Ser493 is modified to Phosphoserine. Tyr516 carries the phosphotyrosine; by autocatalysis modification. Residues 538 to 825 (IVLKRELGEG…ATPIYLDILG (288 aa)) enclose the Protein kinase domain. Residues 544-552 (LGEGAFGKV) and Lys572 contribute to the ATP site. The Proton acceptor role is filled by Asp679. Residues Tyr705, Tyr709, and Tyr710 each carry the phosphotyrosine; by autocatalysis modification.

It belongs to the protein kinase superfamily. Tyr protein kinase family. Insulin receptor subfamily. As to quaternary structure, exists in a dynamic equilibrium between monomeric (low affinity) and dimeric (high affinity) structures. Binds SH2B2. Interacts with SQSTM1 and KIDINS220. Interacts with PTPRS. Interacts with MAPK8IP3/JIP3. In terms of processing, ligand-mediated auto-phosphorylation.

The protein resides in the membrane. It catalyses the reaction L-tyrosyl-[protein] + ATP = O-phospho-L-tyrosyl-[protein] + ADP + H(+). In terms of biological role, receptor tyrosine kinase involved in nervous system and probably heart development. Upon binding of its ligand NTF3/neurotrophin-3, NTRK3 autophosphorylates and activates different signaling pathways, including the phosphatidylinositol 3-kinase/AKT and the MAPK pathways, that control cell survival and differentiation. The protein is NT-3 growth factor receptor (NTRK3) of Macaca fascicularis (Crab-eating macaque).